Consider the following 284-residue polypeptide: Phosphatidylglycerol--prolipoprotein diacylglyceryl transferase (284 aa).

Helical transmembrane passes span 18–38 (LGGIEVHWYGLAYACAIVIAF), 62–82 (YFLWAELGIVLGARIGYVLIY), 106–126 (FVGIRGMSYHGGLVGFLIASY), 136–156 (LLIYLDLIAISLPLGYVFGRI), 190–210 (PSQLIEAFLEGVIVFLMVLWA), 218–238 (GLLIVVYGLGYSLMRFIAEFY), and 252–272 (LSMGQILSLFMVVVSLGILLY). Arg155 is an a 1,2-diacyl-sn-glycero-3-phospho-(1'-sn-glycerol) binding site.

Belongs to the Lgt family.

It is found in the cell inner membrane. The catalysed reaction is L-cysteinyl-[prolipoprotein] + a 1,2-diacyl-sn-glycero-3-phospho-(1'-sn-glycerol) = an S-1,2-diacyl-sn-glyceryl-L-cysteinyl-[prolipoprotein] + sn-glycerol 1-phosphate + H(+). The protein operates within protein modification; lipoprotein biosynthesis (diacylglyceryl transfer). Functionally, catalyzes the transfer of the diacylglyceryl group from phosphatidylglycerol to the sulfhydryl group of the N-terminal cysteine of a prolipoprotein, the first step in the formation of mature lipoproteins. This chain is Phosphatidylglycerol--prolipoprotein diacylglyceryl transferase, found in Helicobacter pylori (strain G27).